The primary structure comprises 342 residues: Organic solute transporter alpha-like protein 2 (342 aa).

The Extracellular segment spans residues 1–50 (MLEISPWETLVKLLTDSLLNCTGTHEDVPHAKTFLRSLTTTYIASLAVAT). N-linked (GlcNAc...) asparagine glycosylation is present at Asn-20. The helical transmembrane segment at 51-71 (AVTVGTVCLAVLHLIYIHFYI) threads the bilayer. Residues 72–79 (THSSRRLH) lie on the Cytoplasmic side of the membrane. The chain crosses the membrane as a helical span at residues 80-100 (IVLLACTAPLVSLLALVAMYM). Residues 101-109 (PRVWFLSHL) lie on the Extracellular side of the membrane. The helical transmembrane segment at 110–130 (LSFLYFSFALWVIICLLLHIF) threads the bilayer. The Cytoplasmic portion of the chain corresponds to 131–176 (DGHHALVTKMMQRLQYVEIATPPFCCLFPCLPKVRLEGKKIRWCEL). The chain crosses the membrane as a helical span at residues 177–197 (MVMQAPIVRLFATLVSLVIYF). Topologically, residues 198 to 208 (EYQDQGLVPLK) are extracellular. Residues 209-229 (VLDFITLPSLLAGIYGTHILV) form a helical membrane-spanning segment. At 230–243 (TTVSRMDELISYRY) the chain is on the cytoplasmic side. Residues 244-264 (VVVFRLLDFFFMVFGLQQPVF) traverse the membrane as a helical segment. At 265–290 (DFLARYGAFGCGTVLPAIETSFYWKN) the chain is on the extracellular side. A helical membrane pass occupies residues 291–311 (FFTVIEAFCVTLISTVLLQPS). Topologically, residues 312–342 (KSSFFDKHPSCRSMSSARSTITDVDTDESTT) are cytoplasmic.

Belongs to the OST-alpha family.

Its subcellular location is the cell membrane. Its function is as follows. Probable transporter. This chain is Organic solute transporter alpha-like protein 2 (osta-2), found in Caenorhabditis elegans.